Here is a 505-residue protein sequence, read N- to C-terminus: L-carnitine/gamma-butyrobetaine antiporter (505 aa).

The next 12 membrane-spanning stretches (helical) occupy residues 10–30 (IEPK…WLTV), 51–71 (WGWA…WLVF), 92–112 (IFMM…SIEI), 143–163 (GPLP…FFFV), 195–215 (FYLV…TPLV), 231–251 (LDAI…ACGL), 263–283 (SYLS…SFIM), 316–336 (WTVF…IFLA), 347–367 (LCFG…TVLG), 403–423 (LSTA…VTLI), 446–466 (LLVR…LLAL), and 475–495 (AIIA…LSFI).

Belongs to the BCCT transporter (TC 2.A.15) family. CaiT subfamily. In terms of assembly, homotrimer.

It is found in the cell inner membrane. It catalyses the reaction 4-(trimethylamino)butanoate(in) + (R)-carnitine(out) = 4-(trimethylamino)butanoate(out) + (R)-carnitine(in). It participates in amine and polyamine metabolism; carnitine metabolism. Functionally, catalyzes the exchange of L-carnitine for gamma-butyrobetaine. This is L-carnitine/gamma-butyrobetaine antiporter from Salmonella gallinarum (strain 287/91 / NCTC 13346).